Consider the following 892-residue polypeptide: Transmembrane channel-like protein 2-B (892 aa).

A disordered region spans residues 29-125 (GINQNLRREE…DESMSEGEMA (97 aa)). Composition is skewed to basic residues over residues 48–58 (RRAKKRRMNRR) and 66–77 (RSKKMRMRVRKN). The segment covering 103 to 112 (PSSCSSSSDN) has biased composition (low complexity). 9 helical membrane passes run 235 to 255 (LVLFGFMFGLVVIPELLMGIP), 275 to 295 (FSVLFEFGGYCKYSILFYGFY), 308 to 328 (LPLSYLLVGVGIFGYSLMVVI), 403 to 423 (LANVLILCCLAGSGYLIYAVV), 444 to 464 (EVEIVMSLLGLVCPPLFEAIA), 482 to 502 (IFALFLGNLYTFLFALFDEVN), 616 to 636 (LIFNQGMIWMGAFYAPGLVGI), 671 to 691 (FYMGLLLLVLFLSLMPVIYSI), and 736 to 756 (GLIISVVLLMVWLAIYYLNAV). The span at 772–785 (QMQRDEEKNRRNNK) shows a compositional bias: basic and acidic residues. 2 disordered regions span residues 772–791 (QMQRDEEKNRRNNKDSTNQV) and 796–892 (EDLL…PPRR). Positions 862 to 878 (PRQPGPLPGNPRGPPPG) are enriched in pro residues.

This sequence belongs to the TMC family. In terms of tissue distribution, in adults, expression is restricted to the hair cells of inner ear and lateral line organ. Expressed at higher levels in the larval lateral-line neuromasts than in the larval inner ear.

Its subcellular location is the membrane. Its function is as follows. Probable component of the mechanotransducer (MET) non-selective cation channel. The polypeptide is Transmembrane channel-like protein 2-B (Danio rerio (Zebrafish)).